Reading from the N-terminus, the 506-residue chain is Glutamate--tRNA ligase (506 aa).

The 'HIGH' region signature appears at 21–31 (PSPTGTPHVGM). The short motif at 265–269 (KLSKR) is the 'KMSKS' region element. Lys268 contacts ATP.

Belongs to the class-I aminoacyl-tRNA synthetase family. Glutamate--tRNA ligase type 1 subfamily. In terms of assembly, monomer.

It is found in the cytoplasm. It carries out the reaction tRNA(Glu) + L-glutamate + ATP = L-glutamyl-tRNA(Glu) + AMP + diphosphate. Functionally, catalyzes the attachment of glutamate to tRNA(Glu) in a two-step reaction: glutamate is first activated by ATP to form Glu-AMP and then transferred to the acceptor end of tRNA(Glu). The polypeptide is Glutamate--tRNA ligase (Bifidobacterium longum (strain DJO10A)).